The sequence spans 388 residues: Sporulation-specific mitogen-activated protein kinase SMK1 (388 aa).

Residues 38 to 337 (YEIIQFLGKG…VEQAISHPFL (300 aa)) enclose the Protein kinase domain. Residues 44 to 52 (LGKGAYGTV) and Lys69 each bind ATP. Residue Asp166 is the Proton acceptor of the active site. The TXY motif lies at 207–209 (TNY).

Belongs to the protein kinase superfamily. CMGC Ser/Thr protein kinase family. MAP kinase subfamily. In terms of assembly, interacts with GSC2. Mg(2+) is required as a cofactor. In terms of processing, dually phosphorylated on Thr-207 and Tyr-209, which activates the enzyme.

It carries out the reaction L-seryl-[protein] + ATP = O-phospho-L-seryl-[protein] + ADP + H(+). The catalysed reaction is L-threonyl-[protein] + ATP = O-phospho-L-threonyl-[protein] + ADP + H(+). Activated by tyrosine and threonine phosphorylation. Functionally, required for spore wall assembly. Required for proper deposition of the two outer layers of the spore wall, the chitosan and dityrosine layers. Negatively regulates GSC2, an alternate catalytic subunit of the 1,3-beta-glucan synthase (GS). Participates in a developmentally regulated signal transduction pathway that coordinates cytodifferentiation events with the transcriptional program. The polypeptide is Sporulation-specific mitogen-activated protein kinase SMK1 (SMK1) (Saccharomyces cerevisiae (strain ATCC 204508 / S288c) (Baker's yeast)).